Reading from the N-terminus, the 542-residue chain is Probable protein kinase UbiB (542 aa).

The Protein kinase domain maps to 123–505 (DFDEQALASA…ADNKTYNVKM (383 aa)). Residues 129–137 (LASASIAQV) and lysine 156 each bind ATP. The active-site Proton acceptor is the aspartate 291. A helical transmembrane segment spans residues 506–526 (IIMGSIILSLLWQFNSLPLWL).

This sequence belongs to the ABC1 family. UbiB subfamily.

Its subcellular location is the cell inner membrane. The protein operates within cofactor biosynthesis; ubiquinone biosynthesis [regulation]. Is probably a protein kinase regulator of UbiI activity which is involved in aerobic coenzyme Q (ubiquinone) biosynthesis. The sequence is that of Probable protein kinase UbiB from Haemophilus ducreyi (strain 35000HP / ATCC 700724).